The primary structure comprises 983 residues: Probable beta-galactosidase C (983 aa).

Positions 1-23 are cleaved as a signal peptide; that stretch reads MRIFSFLFLLLLGILTGQGLVSG. Residues Y82, N127, A128, E129, and N187 each contribute to the substrate site. Catalysis depends on E188, which acts as the Proton donor. N197 carries an N-linked (GlcNAc...) asparagine glycan. Residue Y251 participates in substrate binding. Residues C257 and C304 are joined by a disulfide bond. A glycan (N-linked (GlcNAc...) asparagine) is linked at N276. E287 functions as the Nucleophile in the catalytic mechanism. Y353 serves as a coordination point for substrate. N-linked (GlcNAc...) asparagine glycosylation is found at N391, N434, N466, N516, N601, N676, N714, N719, N758, and N804.

Belongs to the glycosyl hydrolase 35 family.

It is found in the secreted. It carries out the reaction Hydrolysis of terminal non-reducing beta-D-galactose residues in beta-D-galactosides.. Functionally, cleaves beta-linked terminal galactosyl residues from gangliosides, glycoproteins, and glycosaminoglycans. This Aspergillus fumigatus (strain CBS 144.89 / FGSC A1163 / CEA10) (Neosartorya fumigata) protein is Probable beta-galactosidase C (lacC).